A 434-amino-acid chain; its full sequence is 3-phosphoshikimate 1-carboxyvinyltransferase (434 aa).

The 3-phosphoshikimate site is built by Lys22, Ser23, and Arg27. Lys22 contacts phosphoenolpyruvate. Gly93 and Arg121 together coordinate phosphoenolpyruvate. 3-phosphoshikimate is bound by residues Ser168, Ser169, Gln170, Ser199, Asp320, and Lys347. Gln170 provides a ligand contact to phosphoenolpyruvate. The active-site Proton acceptor is the Asp320. Positions 351, 395, and 420 each coordinate phosphoenolpyruvate.

The protein belongs to the EPSP synthase family. In terms of assembly, monomer.

It is found in the cytoplasm. The enzyme catalyses 3-phosphoshikimate + phosphoenolpyruvate = 5-O-(1-carboxyvinyl)-3-phosphoshikimate + phosphate. It participates in metabolic intermediate biosynthesis; chorismate biosynthesis; chorismate from D-erythrose 4-phosphate and phosphoenolpyruvate: step 6/7. Catalyzes the transfer of the enolpyruvyl moiety of phosphoenolpyruvate (PEP) to the 5-hydroxyl of shikimate-3-phosphate (S3P) to produce enolpyruvyl shikimate-3-phosphate and inorganic phosphate. This is 3-phosphoshikimate 1-carboxyvinyltransferase from Cupriavidus necator (strain ATCC 17699 / DSM 428 / KCTC 22496 / NCIMB 10442 / H16 / Stanier 337) (Ralstonia eutropha).